The sequence spans 203 residues: Large ribosomal subunit protein uL6 (203 aa).

This sequence belongs to the universal ribosomal protein uL6 family. Part of the 50S ribosomal subunit.

This protein binds to the 23S rRNA, and is important in its secondary structure. It is located near the subunit interface in the base of the L7/L12 stalk, and near the tRNA binding site of the peptidyltransferase center. The sequence is that of Large ribosomal subunit protein uL6 from Hyphomonas neptunium (strain ATCC 15444).